The chain runs to 84 residues: Small ribosomal subunit protein uS17 (84 aa).

This sequence belongs to the universal ribosomal protein uS17 family. Part of the 30S ribosomal subunit.

Functionally, one of the primary rRNA binding proteins, it binds specifically to the 5'-end of 16S ribosomal RNA. The polypeptide is Small ribosomal subunit protein uS17 (Hamiltonella defensa subsp. Acyrthosiphon pisum (strain 5AT)).